A 249-amino-acid chain; its full sequence is Caffeoyl-CoA O-methyltransferase (249 aa).

K21 contacts substrate. Residues T63, E85, 87-88, S93, D111, and A140 contribute to the S-adenosyl-L-methionine site; that span reads GV. Substrate is bound at residue D162. D162 serves as a coordination point for a divalent metal cation. D164 contacts S-adenosyl-L-methionine. A divalent metal cation is bound by residues D188 and N189. N193 contributes to the substrate binding site.

The protein belongs to the class I-like SAM-binding methyltransferase superfamily. Cation-dependent O-methyltransferase family. CCoAMT subfamily. In terms of assembly, homodimer. The cofactor is a divalent metal cation.

It carries out the reaction (E)-caffeoyl-CoA + S-adenosyl-L-methionine = (E)-feruloyl-CoA + S-adenosyl-L-homocysteine + H(+). Its pathway is aromatic compound metabolism; phenylpropanoid biosynthesis. Its function is as follows. Methylates caffeoyl-CoA to feruloyl-CoA and 5-hydroxyferuloyl-CoA to sinapoyl-CoA. Plays a role in the synthesis of feruloylated polysaccharides. Involved in the reinforcement of the plant cell wall. Also involved in the responding to wounding or pathogen challenge by the increased formation of cell wall-bound ferulic acid polymers. This is Caffeoyl-CoA O-methyltransferase from Eucalyptus gunnii (Cider gum).